A 366-amino-acid chain; its full sequence is Ribosomal RNA large subunit methyltransferase M (366 aa).

S-adenosyl-L-methionine contacts are provided by residues S188, 221–224, D240, D260, and D277; that span reads CPGG. Residue K306 is the Proton acceptor of the active site.

Belongs to the class I-like SAM-binding methyltransferase superfamily. RNA methyltransferase RlmE family. RlmM subfamily. As to quaternary structure, monomer.

Its subcellular location is the cytoplasm. It carries out the reaction cytidine(2498) in 23S rRNA + S-adenosyl-L-methionine = 2'-O-methylcytidine(2498) in 23S rRNA + S-adenosyl-L-homocysteine + H(+). Functionally, catalyzes the 2'-O-methylation at nucleotide C2498 in 23S rRNA. In Photorhabdus sp. (strain Az29), this protein is Ribosomal RNA large subunit methyltransferase M.